Consider the following 459-residue polypeptide: Elongation factor 1-alpha (459 aa).

Gly2 bears the N,N,N-trimethylglycine mark. Lys3 carries the post-translational modification N6,N6-dimethyllysine; alternate. Position 3 is an N6-methyllysine; alternate (Lys3). Positions 5–240 (KLHVNVVVIG…DAIEPPTRPT (236 aa)) constitute a tr-type G domain. Residues 14 to 21 (GHVDSGKS) are G1. Position 14–21 (14–21 (GHVDSGKS)) interacts with GTP. Lys30 is subject to N6-methyllysine. A G2 region spans residues 70–74 (GITID). Residue Lys79 is modified to N6,N6,N6-trimethyllysine. A G3 region spans residues 91-94 (DAPG). GTP-binding positions include 91–95 (DAPGH) and 153–156 (NKMD). A G4 region spans residues 153–156 (NKMD). A G5 region spans residues 192–194 (SGW). Lys316 carries the post-translational modification N6,N6-dimethyllysine; alternate. The residue at position 316 (Lys316) is an N6-methyllysine; alternate. An N6-methyllysine modification is found at Lys390.

Belongs to the TRAFAC class translation factor GTPase superfamily. Classic translation factor GTPase family. EF-Tu/EF-1A subfamily.

It is found in the cytoplasm. Functionally, this protein promotes the GTP-dependent binding of aminoacyl-tRNA to the A-site of ribosomes during protein biosynthesis. This chain is Elongation factor 1-alpha (TEF1), found in Cryptococcus neoformans var. neoformans serotype D (strain B-3501A) (Filobasidiella neoformans).